We begin with the raw amino-acid sequence, 532 residues long: Protein kinase domain-containing protein ppk9 (532 aa).

The region spanning 23-274 (WLLGRTLGQG…VAEIMQHPWF (252 aa)) is the Protein kinase domain. ATP contacts are provided by residues 29–37 (LGQGNLAKV) and K52. The active-site Proton acceptor is the D145. The span at 316–346 (PSSSVGQIPQPTDHSALSPSKPMSISGTESP) shows a compositional bias: polar residues. The segment at 316–349 (PSSSVGQIPQPTDHSALSPSKPMSISGTESPNPD) is disordered.

It localises to the cytoplasm. It is found in the nucleus. The protein resides in the cytoskeleton. The protein localises to the microtubule organizing center. Its subcellular location is the spindle pole body. This Schizosaccharomyces pombe (strain 972 / ATCC 24843) (Fission yeast) protein is Protein kinase domain-containing protein ppk9 (ppk9).